Consider the following 164-residue polypeptide: S-ribosylhomocysteine lyase (164 aa).

Positions 54, 58, and 128 each coordinate Fe cation.

The protein belongs to the LuxS family. In terms of assembly, homodimer. It depends on Fe cation as a cofactor.

It carries out the reaction S-(5-deoxy-D-ribos-5-yl)-L-homocysteine = (S)-4,5-dihydroxypentane-2,3-dione + L-homocysteine. Involved in the synthesis of autoinducer 2 (AI-2) which is secreted by bacteria and is used to communicate both the cell density and the metabolic potential of the environment. The regulation of gene expression in response to changes in cell density is called quorum sensing. Catalyzes the transformation of S-ribosylhomocysteine (RHC) to homocysteine (HC) and 4,5-dihydroxy-2,3-pentadione (DPD). The polypeptide is S-ribosylhomocysteine lyase (Campylobacter jejuni subsp. jejuni serotype O:6 (strain 81116 / NCTC 11828)).